Consider the following 754-residue polypeptide: Relaxin receptor 2 (754 aa).

Residues 1–416 (MIVFLVFKHL…SSFEDLLANN (416 aa)) lie on the Extracellular side of the membrane. Residues 44–81 (SCQKGYFPCGNLTKCLPRAFHCDGKDDCGNGADEENCG) enclose the LDL-receptor class A domain. Disulfide bonds link Cys45–Cys58, Cys52–Cys71, and Cys65–Cys80. Residue Asn54 is glycosylated (N-linked (GlcNAc...) asparagine). N-linked (GlcNAc...) asparagine glycosylation is present at Asn138. 10 LRR repeats span residues 138 to 159 (NVTL…VFIK), 162 to 183 (KLKK…AFFG), 186 to 207 (NLQI…IFKD), 210 to 231 (QLTW…LFTG), 234 to 255 (SLFF…MCAQ), 258 to 279 (QLNW…TFLS), 282 to 303 (SLTV…TFSS), 306 to 327 (NLGE…LFKD), 330 to 351 (LLQK…QFES), and 354 to 375 (QLQS…MFQP). Asn274 carries an N-linked (GlcNAc...) asparagine glycan. The N-linked (GlcNAc...) asparagine glycan is linked to Asn335. Residue Asn378 is glycosylated (N-linked (GlcNAc...) asparagine). Residues 417-437 (ILRIFVWVIAFITCFGNLFVI) traverse the membrane as a helical segment. Topologically, residues 438–455 (GMRSFIKAENTTHAMSIK) are cytoplasmic. The helical transmembrane segment at 456 to 476 (ILCCADCLMGVYLFFVGIFDI) threads the bilayer. Residues 477–495 (KYRGQYQKYALLWMESVQC) lie on the Extracellular side of the membrane. The cysteines at positions 495 and 573 are disulfide-linked. The helical transmembrane segment at 496–518 (RLMGFLAMLSTEVSVLLLTYLTL) threads the bilayer. Residues 519-537 (EKFLVIVFPFSNIRPGKRQ) are Cytoplasmic-facing. A helical membrane pass occupies residues 538–558 (TSVILICIWMAGFLIAVIPFW). Over 559-592 (NKDYFGNFYGKNGVCFPLYYDQTEDIGSKGYSLG) the chain is Extracellular. The chain crosses the membrane as a helical span at residues 593 to 613 (IFLGVNLLAFLIIVFSYITMF). Topologically, residues 614–639 (CSIQKTALQTTEVRNCFGREVAVANR) are cytoplasmic. A helical membrane pass occupies residues 640 to 660 (FFFIVFSDAICWIPVFVVKIL). Residues 661 to 670 (SLFRVEIPDT) are Extracellular-facing. Residues 671–691 (MTSWIVIFFLPVNSALNPILY) form a helical membrane-spanning segment. At 692–754 (TLTTNFFKDK…LGDSIMKPVS (63 aa)) the chain is on the cytoplasmic side.

The protein belongs to the G-protein coupled receptor 1 family. In terms of tissue distribution, expressed mainly in the brain, kidney, muscle, testis, thyroid, uterus, peripheral blood cells and bone marrow.

It is found in the cell membrane. Functionally, receptor for relaxin. The activity of this receptor is mediated by G proteins leading to stimulation of adenylate cyclase and an increase of cAMP. May also be a receptor for Leydig insulin-like peptide (INSL3). The chain is Relaxin receptor 2 (RXFP2) from Homo sapiens (Human).